A 475-amino-acid chain; its full sequence is Solute carrier family 46 member 2 (475 aa).

The Cytoplasmic segment spans residues 1 to 23 (MSPEVTCPRRGHLPRFHPRTWVE). A helical transmembrane segment spans residues 24–44 (PVVASSQVAASLYDAGLLLVV). The Extracellular segment spans residues 45-78 (KASYGTGGSSNHSASPSPRGALEDQQQRAISNFY). The N-linked (GlcNAc...) asparagine glycan is linked to N55. The helical transmembrane segment at 79-99 (IIYNLVVGLSPLLSAYGLGWL) threads the bilayer. Over 100–108 (SDRYHRKIS) the chain is Cytoplasmic. Residues 109–129 (ICMSLLGFLLSRLGLLLKVLL) traverse the membrane as a helical segment. Residues 130-138 (DWPVEVLYG) are Extracellular-facing. A helical membrane pass occupies residues 139-159 (AAALNGLFGGFSAFWSGVMAL). Over 160–172 (GSLGSSEGRRSVR) the chain is Cytoplasmic. The chain crosses the membrane as a helical span at residues 173-193 (LILIDLMLGLAGFCGSMASGH). Topologically, residues 194–205 (LFKQMAGHSGQG) are extracellular. Residues 206–226 (LILTACSVSCASFALLYSLLV) traverse the membrane as a helical segment. Over 227 to 282 (LKVPESVAKPSQELPAVDTVSGTVGTYRTLDPDQLDQQYAVGHPPSPGKAKPHKTT) the chain is Cytoplasmic. The chain crosses the membrane as a helical span at residues 283–303 (IALLFVGAIIYDLAVVGTVDV). Over 304 to 320 (IPLFVLREPLGWNQVQV) the chain is Extracellular. Residues 321–341 (GYGMAAGYTIFITSFLGVLVF) form a helical membrane-spanning segment. Residues 342 to 347 (SRCFRD) lie on the Cytoplasmic side of the membrane. The helical transmembrane segment at 348–368 (TTMIMIGMVSFGSGALLLAFV) threads the bilayer. Topologically, residues 369–370 (KE) are extracellular. Residues 371-391 (TYMFYIARAVMLFALIPVTTI) form a helical membrane-spanning segment. At 392–406 (RSAMSKLIKGSSYGK) the chain is on the cytoplasmic side. Residues 407–427 (VFVILQLSLALTGVVTSTLYN) form a helical membrane-spanning segment. The Extracellular portion of the chain corresponds to 428 to 435 (KIYQLTMD). The helical transmembrane segment at 436–456 (MFVGSCFALSSFLSFLAIIPI) threads the bilayer. At 457-475 (SIVAYKQVPLSPYGDIIEK) the chain is on the cytoplasmic side.

It belongs to the major facilitator superfamily. SLC46A family. In terms of processing, glycosylated. In terms of tissue distribution, strongly expressed in the adult thymus. Expressed in spleen, lymph nodes, thymus, PBL, bone marrow and fetal liver. Expressed in monocytes and pre-dendridic cells.

Its subcellular location is the endosome membrane. It localises to the cell membrane. The catalysed reaction is N-acetyl-beta-D-glucosaminyl-(1-&gt;4)-1,6-anhydro-N-acetyl-beta-D-muramoyl-L-alanyl-gamma-D-glutamyl-meso-2,6-diaminopimeloyl-D-alanine(out) + n H(+)(out) = N-acetyl-beta-D-glucosaminyl-(1-&gt;4)-1,6-anhydro-N-acetyl-beta-D-muramoyl-L-alanyl-gamma-D-glutamyl-meso-2,6-diaminopimeloyl-D-alanine(in) + n H(+)(in). It catalyses the reaction L-alanyl-gamma-D-glutamyl-meso-2,6-diaminopimelate(out) + n H(+)(out) = L-alanyl-gamma-D-glutamyl-meso-2,6-diaminopimelate(in) + n H(+)(in). The enzyme catalyses N-acetyl-D-muramoyl-L-alanyl-D-isoglutamine(out) + n H(+)(out) = N-acetyl-D-muramoyl-L-alanyl-D-isoglutamine(in) + n H(+)(in). It carries out the reaction 2',3'-cGAMP(out) + n H(+)(out) = 2',3'-cGAMP(in) + n H(+)(in). The catalysed reaction is 3',3'-cGAMP(out) + n H(+)(out) = 3',3'-cGAMP(in) + n H(+)(in). Functionally, proton-coupled transporter that delivers pathogen-associated or danger-associated molecular patterns to cytosolic pattern recognition receptors as part of the innate immune response to microbes or tissue injury. Has selectivity toward muropeptides that contain the amino acid diaminopimelic acid (DAP-type peptidoglycan muropeptides) including Tri-DAP and tracheal toxin (TCT), common in Gram-negative bacteria and Gram-positive bacilli. In the context of immune recognition of skin microbiota, shuttles bacterial muropeptides across the endolysosomal membranes into the cytosol for recognition by NOD1, triggering MYD88-dependent secretion of IL1A and neutrophil recruitment in a pyroptosis-type inflammatory process. To a lesser extent and redundantly, transports muramyl dipeptides derived from most bacterial proteoglycans, eliciting NOD2 receptor activation and downstream inflammatory responses. Postulated to function as a dominant importer of cyclic GMP-AMP dinucleotides (cGAMPs) in monocyte and macrophage cell lineages. Selectively imports cGAMPs derived from pathogenic bacteria such as 3'3'-cGAMP thus providing for differential immune recognition of pathogenic versus commensal bacteria. During tumorigenesis may transport extracellular tumor-derived 2'3'-cGAMP across the plasma membrane of M1-polarized macrophages to activate the anti-tumoral stimulator of interferon genes (STING) pathway. The transport mechanism, its electrogenicity and stoichiometry remain to be elucidated. In Homo sapiens (Human), this protein is Solute carrier family 46 member 2.